The sequence spans 504 residues: Anaerobic nitric oxide reductase transcription regulator NorR (504 aa).

Position 57 is a 4-aspartylphosphate (Asp-57). The region spanning 187-416 (MIGLSPGMTQ…LEHAIHRAVV (230 aa)) is the Sigma-54 factor interaction domain. ATP is bound by residues 215–222 (GETGTGKE) and 278–287 (ADNGTLFLDE). The segment at residues 479-498 (WAACARMLETDVANLHRLAK) is a DNA-binding region (H-T-H motif).

The protein operates within nitrogen metabolism; nitric oxide reduction. Required for the expression of anaerobic nitric oxide (NO) reductase, acts as a transcriptional activator for at least the norVW operon. Activation also requires sigma-54. The sequence is that of Anaerobic nitric oxide reductase transcription regulator NorR from Shigella boydii serotype 4 (strain Sb227).